Consider the following 133-residue polypeptide: Small ribosomal subunit protein uS8 (133 aa).

This sequence belongs to the universal ribosomal protein uS8 family. In terms of assembly, part of the 30S ribosomal subunit. Contacts proteins S5 and S12.

One of the primary rRNA binding proteins, it binds directly to 16S rRNA central domain where it helps coordinate assembly of the platform of the 30S subunit. The chain is Small ribosomal subunit protein uS8 from Chlorobaculum parvum (strain DSM 263 / NCIMB 8327) (Chlorobium vibrioforme subsp. thiosulfatophilum).